The sequence spans 122 residues: UPF0102 protein Atu0303 (122 aa).

It belongs to the UPF0102 family.

This chain is UPF0102 protein Atu0303, found in Agrobacterium fabrum (strain C58 / ATCC 33970) (Agrobacterium tumefaciens (strain C58)).